The following is a 70-amino-acid chain: NAD(P)H-quinone oxidoreductase subunit O (70 aa).

It belongs to the complex I NdhO subunit family. NDH-1 can be composed of about 15 different subunits; different subcomplexes with different compositions have been identified which probably have different functions.

Its subcellular location is the cellular thylakoid membrane. The catalysed reaction is a plastoquinone + NADH + (n+1) H(+)(in) = a plastoquinol + NAD(+) + n H(+)(out). It carries out the reaction a plastoquinone + NADPH + (n+1) H(+)(in) = a plastoquinol + NADP(+) + n H(+)(out). Its function is as follows. NDH-1 shuttles electrons from an unknown electron donor, via FMN and iron-sulfur (Fe-S) centers, to quinones in the respiratory and/or the photosynthetic chain. The immediate electron acceptor for the enzyme in this species is believed to be plastoquinone. Couples the redox reaction to proton translocation, and thus conserves the redox energy in a proton gradient. Cyanobacterial NDH-1 also plays a role in inorganic carbon-concentration. The sequence is that of NAD(P)H-quinone oxidoreductase subunit O from Trichormus variabilis (strain ATCC 29413 / PCC 7937) (Anabaena variabilis).